Here is a 674-residue protein sequence, read N- to C-terminus: Methionine--tRNA ligase (674 aa).

A 'HIGH' region motif is present at residues 11-21; it reads PYANGDLHLGH. Zn(2+)-binding residues include Cys142, Cys145, Cys155, and Cys158. The 'KMSKS' region motif lies at 330–334; that stretch reads KMSKS. Residue Lys333 participates in ATP binding. Positions 574-674 constitute a tRNA-binding domain; it reads DFMKVDLRIA…EGAQPGMRVK (101 aa).

It belongs to the class-I aminoacyl-tRNA synthetase family. MetG type 1 subfamily. As to quaternary structure, homodimer. Zn(2+) serves as cofactor.

It is found in the cytoplasm. The catalysed reaction is tRNA(Met) + L-methionine + ATP = L-methionyl-tRNA(Met) + AMP + diphosphate. Is required not only for elongation of protein synthesis but also for the initiation of all mRNA translation through initiator tRNA(fMet) aminoacylation. The protein is Methionine--tRNA ligase of Francisella tularensis subsp. holarctica (strain FTNF002-00 / FTA).